The sequence spans 256 residues: 5-oxoprolinase subunit A (256 aa).

This sequence belongs to the LamB/PxpA family. Forms a complex composed of PxpA, PxpB and PxpC.

It carries out the reaction 5-oxo-L-proline + ATP + 2 H2O = L-glutamate + ADP + phosphate + H(+). Its function is as follows. Catalyzes the cleavage of 5-oxoproline to form L-glutamate coupled to the hydrolysis of ATP to ADP and inorganic phosphate. The sequence is that of 5-oxoprolinase subunit A from Geobacillus kaustophilus (strain HTA426).